A 60-amino-acid chain; its full sequence is MAVPKQKRSRSRTHHKRAKIYRAISVPLEKCPNCGEYKMPHRVCLHCGYYKGKQVLEISE.

Belongs to the bacterial ribosomal protein bL32 family.

This chain is Large ribosomal subunit protein bL32 (rpmF), found in Thermotoga maritima (strain ATCC 43589 / DSM 3109 / JCM 10099 / NBRC 100826 / MSB8).